The sequence spans 412 residues: Multifunctional CCA protein (412 aa).

G8 and R11 together coordinate ATP. G8 and R11 together coordinate CTP. 2 residues coordinate Mg(2+): E21 and D23. Positions 92, 138, and 141 each coordinate ATP. Residues R92, R138, and R141 each contribute to the CTP site. An HD domain is found at 227–328 (TGIHTMMTVA…IKLFYAIDVW (102 aa)).

The protein belongs to the tRNA nucleotidyltransferase/poly(A) polymerase family. Bacterial CCA-adding enzyme type 1 subfamily. As to quaternary structure, monomer. Can also form homodimers and oligomers. Mg(2+) serves as cofactor. Requires Ni(2+) as cofactor.

The enzyme catalyses a tRNA precursor + 2 CTP + ATP = a tRNA with a 3' CCA end + 3 diphosphate. The catalysed reaction is a tRNA with a 3' CCA end + 2 CTP + ATP = a tRNA with a 3' CCACCA end + 3 diphosphate. Functionally, catalyzes the addition and repair of the essential 3'-terminal CCA sequence in tRNAs without using a nucleic acid template. Adds these three nucleotides in the order of C, C, and A to the tRNA nucleotide-73, using CTP and ATP as substrates and producing inorganic pyrophosphate. tRNA 3'-terminal CCA addition is required both for tRNA processing and repair. Also involved in tRNA surveillance by mediating tandem CCA addition to generate a CCACCA at the 3' terminus of unstable tRNAs. While stable tRNAs receive only 3'-terminal CCA, unstable tRNAs are marked with CCACCA and rapidly degraded. The polypeptide is Multifunctional CCA protein (Baumannia cicadellinicola subsp. Homalodisca coagulata).